The chain runs to 119 residues: Large ribosomal subunit protein uL18 (119 aa).

This sequence belongs to the universal ribosomal protein uL18 family. As to quaternary structure, part of the 50S ribosomal subunit; part of the 5S rRNA/L5/L18/L25 subcomplex. Contacts the 5S and 23S rRNAs.

This is one of the proteins that bind and probably mediate the attachment of the 5S RNA into the large ribosomal subunit, where it forms part of the central protuberance. This chain is Large ribosomal subunit protein uL18, found in Malacoplasma penetrans (strain HF-2) (Mycoplasma penetrans).